We begin with the raw amino-acid sequence, 495 residues long: Cobyric acid synthase (495 aa).

Residues 256-444 form the GATase cobBQ-type domain; sequence KVNVAVVLLR…VHGILDNPSV (189 aa). C337 (nucleophile) is an active-site residue. Residue H436 is part of the active site.

The protein belongs to the CobB/CobQ family. CobQ subfamily.

It participates in cofactor biosynthesis; adenosylcobalamin biosynthesis. In terms of biological role, catalyzes amidations at positions B, D, E, and G on adenosylcobyrinic A,C-diamide. NH(2) groups are provided by glutamine, and one molecule of ATP is hydrogenolyzed for each amidation. The polypeptide is Cobyric acid synthase (Bacteroides fragilis (strain ATCC 25285 / DSM 2151 / CCUG 4856 / JCM 11019 / LMG 10263 / NCTC 9343 / Onslow / VPI 2553 / EN-2)).